Consider the following 317-residue polypeptide: Acetyl-coenzyme A carboxylase carboxyl transferase subunit alpha (317 aa).

Residues 39-293 (RLETKAREAL…GDAIADALSQ (255 aa)) enclose the CoA carboxyltransferase C-terminal domain.

It belongs to the AccA family. In terms of assembly, acetyl-CoA carboxylase is a heterohexamer composed of biotin carboxyl carrier protein (AccB), biotin carboxylase (AccC) and two subunits each of ACCase subunit alpha (AccA) and ACCase subunit beta (AccD).

The protein resides in the cytoplasm. It carries out the reaction N(6)-carboxybiotinyl-L-lysyl-[protein] + acetyl-CoA = N(6)-biotinyl-L-lysyl-[protein] + malonyl-CoA. It participates in lipid metabolism; malonyl-CoA biosynthesis; malonyl-CoA from acetyl-CoA: step 1/1. In terms of biological role, component of the acetyl coenzyme A carboxylase (ACC) complex. First, biotin carboxylase catalyzes the carboxylation of biotin on its carrier protein (BCCP) and then the CO(2) group is transferred by the carboxyltransferase to acetyl-CoA to form malonyl-CoA. The polypeptide is Acetyl-coenzyme A carboxylase carboxyl transferase subunit alpha (Xanthobacter autotrophicus (strain ATCC BAA-1158 / Py2)).